The following is an 802-amino-acid chain: Endoplasmin (802 aa).

The signal sequence occupies residues 1–21 (MRALWVLGLCCVLLTFGSARA). An SRT pseudosubstrate motif motif is present at residues 42 to 44 (SRT). Asn62 carries an N-linked (GlcNAc...) asparagine glycan. Phosphoserine is present on Ser64. Asn107 carries N-linked (GlcNAc...) asparagine glycosylation. Positions 107, 149, and 162 each coordinate ATP. At Lys168 the chain carries N6-(2-hydroxyisobutyryl)lysine. A Phosphoserine modification is found at Ser172. Phe199 serves as a coordination point for ATP. Residue Asn217 is glycosylated (N-linked (GlcNAc...) asparagine). A disordered region spans residues 288-323 (TVEEPAEEEEAAKEEKEEADDEAAVEEEEEEKKPKT). Residues 289–317 (VEEPAEEEEAAKEEKEEADDEAAVEEEEE) are compositionally biased toward acidic residues. Ser403 carries the post-translational modification Phosphoserine. The residue at position 404 (Lys404) is an N6-succinyllysine. A glycan (N-linked (GlcNAc...) asparagine) is linked at Asn445. Ser447 is modified (phosphoserine). An N6-acetyllysine modification is found at Lys479. N-linked (GlcNAc...) asparagine glycosylation is found at Asn481 and Asn502. Position 633 is an N6-succinyllysine (Lys633). A disordered region spans residues 750 to 802 (DPDAKVEEEPEEEPEDTTEDTEQDEEEEMDAGTDEEEQEQEPEKKSTAEKDEL). Residues 757–789 (EEPEEEPEDTTEDTEQDEEEEMDAGTDEEEQEQ) are compositionally biased toward acidic residues. At Thr782 the chain carries Phosphothreonine. The span at 790–802 (EPEKKSTAEKDEL) shows a compositional bias: basic and acidic residues. The short motif at 799-802 (KDEL) is the Prevents secretion from ER element.

The protein belongs to the heat shock protein 90 family. As to quaternary structure, homodimer; disulfide-linked. Component of an EIF2 complex at least composed of CELF1/CUGBP1, CALR, CALR3, EIF2S1, EIF2S2, HSP90B1 and HSPA5. Part of a large chaperone multiprotein complex comprising DNAJB11, HSP90B1, HSPA5, HYOU, PDIA2, PDIA4, PDIA6, PPIB, SDF2L1, UGGT1 and very small amounts of ERP29, but not, or at very low levels, CALR nor CANX. Interacts with AIMP1; regulates its retention in the endoplasmic reticulum. Hyperglycosylated form interacts with OS9; promoting its degradation by the endoplasmic reticulum associated degradation (ERAD). Interacts with CNPY3. This interaction is disrupted in the presence of ATP. Interacts with TLR4 and TLR9, but not with TLR3. Interacts with MZB1 in a calcium-dependent manner. Interacts with METTL23. Interacts with IL1B; the interaction facilitates cargo translocation into the ERGIC. Interacts with EIF2AK3. Phosphorylated by CK2. In terms of processing, N-glycosylated cotranslationally at Asn-217 by STT3A-containing OST-A complex: this glycosylation is constitutive. In response to various stress, 5 additional facultative sites (Asn-62, Asn-107, Asn-445, Asn-481 and Asn-502) can be glycosylated post-translationally by STT3B-containing OST-B complex, leading to a hyperglycosylated form that is degraded by the ER-associated degradation (ERAD) pathway. In normal conditions, the OST-A complex together with CCDC134 prevent glycosylation at facultative sites during protein folding, thereby preventing hyperglycosylation. Mechanistically, nascent HSP90B1 is tethered during translation to a specialized CCDC134-containing translocon that forms a microenvironment for its folding, in which STT3A associates with the SRT pseudosubstrate motif, and prevents access to facultative glycosylation sites until folding is completed, rendering its facultative sites inaccessible to the OST-B complex.

It is found in the endoplasmic reticulum lumen. The protein localises to the sarcoplasmic reticulum lumen. It localises to the melanosome. It catalyses the reaction ATP + H2O = ADP + phosphate + H(+). Functionally, ATP-dependent chaperone involved in the processing of proteins in the endoplasmic reticulum, regulating their transport. Together with MESD, acts as a modulator of the Wnt pathway by promoting the folding of LRP6, a coreceptor of the canonical Wnt pathway. When associated with CNPY3, required for proper folding of Toll-like receptors. Promotes folding and trafficking of TLR4 to the cell surface. May participate in the unfolding of cytosolic leaderless cargos (lacking the secretion signal sequence) such as the interleukin 1/IL-1 to facilitate their translocation into the ERGIC (endoplasmic reticulum-Golgi intermediate compartment) and secretion; the translocation process is mediated by the cargo receptor TMED10. This Oryctolagus cuniculus (Rabbit) protein is Endoplasmin (HSP90B1).